Reading from the N-terminus, the 453-residue chain is Bifunctional protein GlmU (453 aa).

Residues 1 to 225 form a pyrophosphorylase region; sequence MNIVILAAGT…EWETLGVNSK (225 aa). Residues 6–9, Lys20, Gln71, 76–77, 98–100, Gly135, Glu150, Asn165, and Asn223 each bind UDP-N-acetyl-alpha-D-glucosamine; these read LAAG, GT, and YGD. Residue Asp100 coordinates Mg(2+). Residue Asn223 participates in Mg(2+) binding. The tract at residues 226-246 is linker; sequence AQLAELERIHQRKLAEALLAD. The N-acetyltransferase stretch occupies residues 247 to 453; it reads GVTLADPARI…GYVRPVKKKS (207 aa). UDP-N-acetyl-alpha-D-glucosamine-binding residues include Arg329 and Lys347. His359 serves as the catalytic Proton acceptor. The UDP-N-acetyl-alpha-D-glucosamine site is built by Tyr362 and Asn373. Acetyl-CoA contacts are provided by residues Ala376, 382-383, Ser401, and Ala419; that span reads NY.

In the N-terminal section; belongs to the N-acetylglucosamine-1-phosphate uridyltransferase family. The protein in the C-terminal section; belongs to the transferase hexapeptide repeat family. In terms of assembly, homotrimer. Mg(2+) is required as a cofactor.

It localises to the cytoplasm. It catalyses the reaction alpha-D-glucosamine 1-phosphate + acetyl-CoA = N-acetyl-alpha-D-glucosamine 1-phosphate + CoA + H(+). It carries out the reaction N-acetyl-alpha-D-glucosamine 1-phosphate + UTP + H(+) = UDP-N-acetyl-alpha-D-glucosamine + diphosphate. The protein operates within nucleotide-sugar biosynthesis; UDP-N-acetyl-alpha-D-glucosamine biosynthesis; N-acetyl-alpha-D-glucosamine 1-phosphate from alpha-D-glucosamine 6-phosphate (route II): step 2/2. It participates in nucleotide-sugar biosynthesis; UDP-N-acetyl-alpha-D-glucosamine biosynthesis; UDP-N-acetyl-alpha-D-glucosamine from N-acetyl-alpha-D-glucosamine 1-phosphate: step 1/1. It functions in the pathway bacterial outer membrane biogenesis; LPS lipid A biosynthesis. In terms of biological role, catalyzes the last two sequential reactions in the de novo biosynthetic pathway for UDP-N-acetylglucosamine (UDP-GlcNAc). The C-terminal domain catalyzes the transfer of acetyl group from acetyl coenzyme A to glucosamine-1-phosphate (GlcN-1-P) to produce N-acetylglucosamine-1-phosphate (GlcNAc-1-P), which is converted into UDP-GlcNAc by the transfer of uridine 5-monophosphate (from uridine 5-triphosphate), a reaction catalyzed by the N-terminal domain. This chain is Bifunctional protein GlmU, found in Burkholderia thailandensis (strain ATCC 700388 / DSM 13276 / CCUG 48851 / CIP 106301 / E264).